The chain runs to 739 residues: Phosphoribosylformylglycinamidine synthase subunit PurL (739 aa).

His-55 is an active-site residue. 2 residues coordinate ATP: Tyr-58 and Lys-97. Residue Glu-99 participates in Mg(2+) binding. Substrate is bound by residues 100–103 (SHNH) and Arg-122. His-101 acts as the Proton acceptor in catalysis. Mg(2+) is bound at residue Asp-123. Residue Gln-246 participates in substrate binding. Residue Asp-276 coordinates Mg(2+). Residue 320 to 322 (ESQ) participates in substrate binding. Residues Asp-502 and Gly-539 each contribute to the ATP site. Asn-540 contacts Mg(2+). A substrate-binding site is contributed by Ser-542.

It belongs to the FGAMS family. In terms of assembly, monomer. Part of the FGAM synthase complex composed of 1 PurL, 1 PurQ and 2 PurS subunits.

Its subcellular location is the cytoplasm. The enzyme catalyses N(2)-formyl-N(1)-(5-phospho-beta-D-ribosyl)glycinamide + L-glutamine + ATP + H2O = 2-formamido-N(1)-(5-O-phospho-beta-D-ribosyl)acetamidine + L-glutamate + ADP + phosphate + H(+). It participates in purine metabolism; IMP biosynthesis via de novo pathway; 5-amino-1-(5-phospho-D-ribosyl)imidazole from N(2)-formyl-N(1)-(5-phospho-D-ribosyl)glycinamide: step 1/2. In terms of biological role, part of the phosphoribosylformylglycinamidine synthase complex involved in the purines biosynthetic pathway. Catalyzes the ATP-dependent conversion of formylglycinamide ribonucleotide (FGAR) and glutamine to yield formylglycinamidine ribonucleotide (FGAM) and glutamate. The FGAM synthase complex is composed of three subunits. PurQ produces an ammonia molecule by converting glutamine to glutamate. PurL transfers the ammonia molecule to FGAR to form FGAM in an ATP-dependent manner. PurS interacts with PurQ and PurL and is thought to assist in the transfer of the ammonia molecule from PurQ to PurL. In Lactiplantibacillus plantarum (strain ATCC BAA-793 / NCIMB 8826 / WCFS1) (Lactobacillus plantarum), this protein is Phosphoribosylformylglycinamidine synthase subunit PurL.